A 136-amino-acid polypeptide reads, in one-letter code: Sec-independent protein translocase protein TatB (136 aa).

The chain crosses the membrane as a helical span at residues 2 to 22 (FGSVGWGELLVLLIVGLVVLG). A disordered region spans residues 107-136 (VTEPAPTPIVNPELAKPAEPGPTRYDADAT).

The protein belongs to the TatB family. As to quaternary structure, the Tat system comprises two distinct complexes: a TatABC complex, containing multiple copies of TatA, TatB and TatC subunits, and a separate TatA complex, containing only TatA subunits. Substrates initially bind to the TatABC complex, which probably triggers association of the separate TatA complex to form the active translocon.

It is found in the cell membrane. Its function is as follows. Part of the twin-arginine translocation (Tat) system that transports large folded proteins containing a characteristic twin-arginine motif in their signal peptide across membranes. Together with TatC, TatB is part of a receptor directly interacting with Tat signal peptides. TatB may form an oligomeric binding site that transiently accommodates folded Tat precursor proteins before their translocation. This Mycobacteroides abscessus (strain ATCC 19977 / DSM 44196 / CCUG 20993 / CIP 104536 / JCM 13569 / NCTC 13031 / TMC 1543 / L948) (Mycobacterium abscessus) protein is Sec-independent protein translocase protein TatB.